A 189-amino-acid chain; its full sequence is Large ribosomal subunit protein uL6 (189 aa).

It belongs to the universal ribosomal protein uL6 family. Part of the 50S ribosomal subunit.

Its function is as follows. This protein binds to the 23S rRNA, and is important in its secondary structure. It is located near the subunit interface in the base of the L7/L12 stalk, and near the tRNA binding site of the peptidyltransferase center. In Bacteroides thetaiotaomicron (strain ATCC 29148 / DSM 2079 / JCM 5827 / CCUG 10774 / NCTC 10582 / VPI-5482 / E50), this protein is Large ribosomal subunit protein uL6.